A 509-amino-acid polypeptide reads, in one-letter code: uncharacterized protein (509 aa).

The G domain maps to 108–225 (GKSSLCNLLA…KRHKPLFPVI (118 aa)).

This is an uncharacterized protein from Acinetobacter baylyi (strain ATCC 33305 / BD413 / ADP1).